The primary structure comprises 308 residues: B3 domain-containing protein REM23 (308 aa).

Positions 19 to 114 (FFKVLKRSDM…SFTVKIFNKD (96 aa)) form a DNA-binding region, TF-B3 1. The tract at residues 117 to 198 (EMMQPPQSRA…TERTQNSKRT (82 aa)) is disordered. Over residues 121-133 (PPQSRASFASSSR) the composition is skewed to polar residues. The span at 134–145 (VKTEQDVKREEE) shows a compositional bias: basic and acidic residues. Over residues 149 to 166 (SSDSRSRGPTTAAETNRG) the composition is skewed to polar residues. The span at 168–177 (SYKRKLNFGK) shows a compositional bias: basic residues. Basic and acidic residues predominate over residues 178-198 (KKAEETQTYKRTERTQNSKRT). Residues 216–308 (VAGFKIFISK…LELLLVVSKP (93 aa)) constitute a DNA-binding region (TF-B3 2).

Its subcellular location is the nucleus. This is B3 domain-containing protein REM23 (REM23) from Arabidopsis thaliana (Mouse-ear cress).